Here is a 419-residue protein sequence, read N- to C-terminus: Inward rectifier potassium channel 16 (419 aa).

Residues 1 to 67 are Cytoplasmic-facing; sequence MSYYGSSYRI…MVDIFTTLVD (67 aa). Residues 68–94 form a helical membrane-spanning segment; the sequence is TKWRHMFVVFSLSYILSWLIFGSIFWL. Over 95–117 the chain is Extracellular; it reads IALHHGDLLSDPDITPCVDNVHS. Residues 118–134 constitute an intramembrane region (helical; Pore-forming); sequence FTAAFLFSLETQTTIGY. Positions 131–136 match the Selectivity filter motif; that stretch reads TIGYGY. Topologically, residues 135-143 are extracellular; it reads GYRCVTEEC. A helical membrane pass occupies residues 144 to 171; that stretch reads SVAVLTVILQSILSCIINTFIIGAALAK. Residues 172-419 are Cytoplasmic-facing; sequence MATARKRAQT…LNRISMESQM (248 aa). Phosphoserine is present on residues S358, S374, and S376.

It belongs to the inward rectifier-type potassium channel (TC 1.A.2.1) family. KCNJ16 subfamily. In terms of assembly, it forms heteromeric channels with Kir4.1/KCNJ10; this interaction is required for KCNJ16 localization to the basolateral membrane in kidney cells. As a heteromer with KCNJ10, may interact with MAGI1; this interaction may facilitate KCNJ10/KCNJ16 potassium channel expression at the basolateral membrane in kidney cells. May form heteromers with Kir2.1/KCNJ2. Can form heteromeric channels with Kir4.2/KCNJ15. Expressed in the brain, testis, liver, spleen, kidney, submaxillary gland and adrenals. In the kidney, expressed in the epithelial cells of both proximal and distal convoluted tubules, in the endothelial cells surrounding glomerular capillaries and in the flattened parietal layer of Bowman's capsule.

The protein localises to the membrane. The protein resides in the basolateral cell membrane. It catalyses the reaction K(+)(in) = K(+)(out). Channel activity is strongly regulated by variations of cytosolic pH; channels are activated by alkaline and inhibited by acidic pH values. Activated by phosphatidylinositol 4,5 biphosphate (PtdIns(4,5)P2). Functionally, inward rectifier potassium channels are characterized by a greater tendency to allow potassium to flow into the cell rather than out of it. Their voltage dependence is regulated by the concentration of extracellular potassium; as external potassium is raised, the voltage range of the channel opening shifts to more positive voltages. The inward rectification is mainly due to the blockage of outward current by internal magnesium. KCNJ16 may be involved in the regulation of fluid and pH balance. In the kidney, together with KCNJ10, mediates basolateral K(+) recycling in distal tubules; this process is critical for Na(+) reabsorption at the tubules. The protein is Inward rectifier potassium channel 16 (Kcnj16) of Rattus norvegicus (Rat).